The following is a 184-amino-acid chain: Shikimate kinase (184 aa).

15-20 (GAGKTS) contributes to the ATP binding site. Residue Thr-19 participates in Mg(2+) binding. Substrate-binding residues include Asp-37, Arg-61, and Gly-83. Arg-123 is a binding site for ATP. A substrate-binding site is contributed by Arg-142.

This sequence belongs to the shikimate kinase family. Monomer. Mg(2+) is required as a cofactor.

The protein localises to the cytoplasm. It carries out the reaction shikimate + ATP = 3-phosphoshikimate + ADP + H(+). Its pathway is metabolic intermediate biosynthesis; chorismate biosynthesis; chorismate from D-erythrose 4-phosphate and phosphoenolpyruvate: step 5/7. Catalyzes the specific phosphorylation of the 3-hydroxyl group of shikimic acid using ATP as a cosubstrate. The chain is Shikimate kinase from Coxiella burnetii (strain CbuK_Q154) (Coxiella burnetii (strain Q154)).